The following is an 851-amino-acid chain: Beta-galactosidase BoGH2A (851 aa).

A signal peptide spans Met1 to Ser19. Cys20 carries N-palmitoyl cysteine lipidation. Cys20 carries S-diacylglycerol cysteine lipidation. Catalysis depends on Glu437, which acts as the Proton donor. Catalysis depends on Glu544, which acts as the Nucleophile.

This sequence belongs to the glycosyl hydrolase 2 family.

It localises to the cell inner membrane. The catalysed reaction is Hydrolysis of terminal non-reducing beta-D-galactose residues in beta-D-galactosides.. Its pathway is glucan metabolism; xyloglucan degradation. In terms of biological role, catalyzes the hydrolysis of terminal non-reducing beta-D-galactose residues in beta-D-galactosides in xyloglucan degradation, converting 'L' units to 'X' units. This Bacteroides ovatus (strain ATCC 8483 / DSM 1896 / JCM 5824 / BCRC 10623 / CCUG 4943 / NCTC 11153) protein is Beta-galactosidase BoGH2A.